The chain runs to 124 residues: Small ribosomal subunit protein uS13 (124 aa).

The disordered stretch occupies residues 91-124 (HRKGLPVNGQNTRNNARTRKGKPKAVTGKKQAGK).

The protein belongs to the universal ribosomal protein uS13 family. In terms of assembly, part of the 30S ribosomal subunit. Forms a loose heterodimer with protein S19. Forms two bridges to the 50S subunit in the 70S ribosome.

Its function is as follows. Located at the top of the head of the 30S subunit, it contacts several helices of the 16S rRNA. In the 70S ribosome it contacts the 23S rRNA (bridge B1a) and protein L5 of the 50S subunit (bridge B1b), connecting the 2 subunits; these bridges are implicated in subunit movement. Contacts the tRNAs in the A and P-sites. This is Small ribosomal subunit protein uS13 from Acholeplasma laidlawii (strain PG-8A).